A 444-amino-acid polypeptide reads, in one-letter code: Divalent metal cation transporter MntH (444 aa).

11 helical membrane passes run 31-51 (GGHW…VSVG), 68-88 (FGYL…VLQG), 115-135 (LALW…EVIG), 146-166 (IPLT…LLLM), 175-195 (AFVM…IALA), 212-232 (VVTN…TVMP), 267-287 (VALM…AAVF), 303-323 (ALLA…VALL), 356-376 (LLTR…YGEA), 381-401 (LLVL…IPLV), and 413-433 (LVAP…IVGL).

Belongs to the NRAMP family.

The protein localises to the cell inner membrane. Functionally, h(+)-stimulated, divalent metal cation uptake system. This is Divalent metal cation transporter MntH from Xanthomonas campestris pv. campestris (strain ATCC 33913 / DSM 3586 / NCPPB 528 / LMG 568 / P 25).